Here is a 362-residue protein sequence, read N- to C-terminus: Patr class I histocompatibility antigen, A-5 alpha chain (362 aa).

An N-terminal signal peptide occupies residues 1–24 (MQVTAPRTVLLLLSAALALTETWA). Residues 25-114 (GSHSMKYFYT…LRGYYNQSEA (90 aa)) form an alpha-1 region. Residues 25–308 (GSHSMKYFYT…EPSSQSTIPI (284 aa)) are Extracellular-facing. N-linked (GlcNAc...) asparagine glycosylation is present at asparagine 110. The segment at 115–206 (GSHIIQRMYG…ENGKETLQRA (92 aa)) is alpha-2. 2 disulfide bridges follow: cysteine 125-cysteine 188 and cysteine 227-cysteine 283. An alpha-3 region spans residues 207-298 (DPPKTHVTHH…GLPKPLTLRW (92 aa)). An Ig-like C1-type domain is found at 209–295 (PKTHVTHHPI…QHEGLPKPLT (87 aa)). A connecting peptide region spans residues 299–308 (EPSSQSTIPI). Residues 309-332 (VGIVAGLAVLAVVVIGAVVAAVMC) form a helical membrane-spanning segment. Residues 333–362 (RRKSSGGKGGSYSQAASSDSAQGSDVSLTA) lie on the Cytoplasmic side of the membrane. The disordered stretch occupies residues 336-362 (SSGGKGGSYSQAASSDSAQGSDVSLTA). A Phosphoserine modification is found at serine 343. Residues 343–362 (SYSQAASSDSAQGSDVSLTA) show a composition bias toward low complexity. Tyrosine 344 bears the Phosphotyrosine mark. Phosphoserine occurs at positions 345, 349, 350, 352, 356, and 359.

This sequence belongs to the MHC class I family. Heterodimer of an alpha chain and a beta chain (beta-2-microglobulin).

It is found in the membrane. Involved in the presentation of foreign antigens to the immune system. This is Patr class I histocompatibility antigen, A-5 alpha chain from Pan troglodytes (Chimpanzee).